The chain runs to 249 residues: SRR1-like protein (249 aa).

Positions 1 to 40 (MAAAALEPWSAVAPRRRKRAAGRRPRPGEGPRAEPEADGE) are disordered. Basic residues predominate over residues 14–25 (PRRRKRAAGRRP). A compositionally biased stretch (basic and acidic residues) spans 26-40 (RPGEGPRAEPEADGE).

The protein belongs to the SRR1 family.

The protein localises to the cytoplasm. In terms of biological role, plays a role in the regulation of heme biosynthesis and in the regulation of the expression of core clock genes. This chain is SRR1-like protein (Srrd), found in Mus musculus (Mouse).